Here is a 318-residue protein sequence, read N- to C-terminus: Deoxyhypusine hydroxylase (318 aa).

Fe cation is bound by residues His-65, Glu-66, His-98, and Glu-99. HEAT-like PBS-type repeat units lie at residues 96–122 (VRHE…YYKE), 194–220 (YRYR…GFKD), 225–251 (FRHE…VLEN), and 258–284 (VRHE…FSKD). Residues His-227, Glu-228, His-260, and Glu-261 each contribute to the Fe cation site.

The protein belongs to the deoxyhypusine hydroxylase family. It depends on Fe(2+) as a cofactor.

It localises to the cytoplasm. Its subcellular location is the nucleus. The catalysed reaction is [eIF5A protein]-deoxyhypusine + AH2 + O2 = [eIF5A protein]-hypusine + A + H2O. It functions in the pathway protein modification; eIF5A hypusination. Functionally, catalyzes the hydroxylation of the N(6)-(4-aminobutyl)-L-lysine intermediate to form hypusine, an essential post-translational modification only found in mature eIF-5A factor. The polypeptide is Deoxyhypusine hydroxylase (lia1) (Schizosaccharomyces pombe (strain 972 / ATCC 24843) (Fission yeast)).